Here is a 1184-residue protein sequence, read N- to C-terminus: DNA-directed RNA polymerase subunit beta (1184 aa).

The interval 1160–1184 (DDDFTNQNDAFNIVQPENAAAEKTE) is disordered.

Belongs to the RNA polymerase beta chain family. In terms of assembly, the RNAP catalytic core consists of 2 alpha, 1 beta, 1 beta' and 1 omega subunit. When a sigma factor is associated with the core the holoenzyme is formed, which can initiate transcription.

It carries out the reaction RNA(n) + a ribonucleoside 5'-triphosphate = RNA(n+1) + diphosphate. In terms of biological role, DNA-dependent RNA polymerase catalyzes the transcription of DNA into RNA using the four ribonucleoside triphosphates as substrates. This Listeria monocytogenes serotype 4b (strain F2365) protein is DNA-directed RNA polymerase subunit beta.